A 131-amino-acid polypeptide reads, in one-letter code: Transcription antitermination protein NusB (131 aa).

It belongs to the NusB family.

In terms of biological role, involved in transcription antitermination. Required for transcription of ribosomal RNA (rRNA) genes. Binds specifically to the boxA antiterminator sequence of the ribosomal RNA (rrn) operons. The sequence is that of Transcription antitermination protein NusB from Campylobacter hominis (strain ATCC BAA-381 / DSM 21671 / CCUG 45161 / LMG 19568 / NCTC 13146 / CH001A).